The following is a 1406-amino-acid chain: DNA-directed RNA polymerase subunit beta' (1406 aa).

Positions 70, 72, 85, and 88 each coordinate Zn(2+). Aspartate 460, aspartate 462, and aspartate 464 together coordinate Mg(2+). Zn(2+)-binding residues include cysteine 814, cysteine 888, cysteine 895, and cysteine 898.

Belongs to the RNA polymerase beta' chain family. In terms of assembly, the RNAP catalytic core consists of 2 alpha, 1 beta, 1 beta' and 1 omega subunit. When a sigma factor is associated with the core the holoenzyme is formed, which can initiate transcription. Mg(2+) is required as a cofactor. Requires Zn(2+) as cofactor.

The catalysed reaction is RNA(n) + a ribonucleoside 5'-triphosphate = RNA(n+1) + diphosphate. DNA-dependent RNA polymerase catalyzes the transcription of DNA into RNA using the four ribonucleoside triphosphates as substrates. The chain is DNA-directed RNA polymerase subunit beta' from Yersinia pseudotuberculosis serotype O:1b (strain IP 31758).